A 505-amino-acid polypeptide reads, in one-letter code: Beta-glucosidase 3 (505 aa).

The first 22 residues, 1 to 22 (MAAAAAFFCALLFISVQHGVLG), serve as a signal peptide directing secretion. A beta-D-glucoside contacts are provided by Gln43 and His143. Glu189 functions as the Proton donor in the catalytic mechanism. Cys208 and Cys217 are joined by a disulfide. Asn221 is a glycosylation site (N-linked (GlcNAc...) asparagine). 2 residues coordinate a beta-D-glucoside: Tyr333 and Glu405. Glu405 serves as the catalytic Nucleophile. Residues Asn415 and Asn436 are each glycosylated (N-linked (GlcNAc...) asparagine). The a beta-D-glucoside site is built by Trp450 and Tyr466.

The protein belongs to the glycosyl hydrolase 1 family.

It carries out the reaction Hydrolysis of terminal, non-reducing beta-D-glucosyl residues with release of beta-D-glucose.. This Oryza sativa subsp. japonica (Rice) protein is Beta-glucosidase 3 (BGLU3).